A 302-amino-acid chain; its full sequence is Probable protein ABIL4 (302 aa).

2 disordered regions span residues 151 to 179 (PSTGHKRTQAARLQTDNGQDSKPKPYPSA) and 220 to 256 (LLGKDIPASPMHKPLQPNGNTSFDAKKNVGSKDQPGF). Polar residues predominate over residues 161-170 (ARLQTDNGQD).

It belongs to the ABI family. In terms of assembly, binds SCAR.

Its subcellular location is the cytoplasm. The protein resides in the cytoskeleton. Involved in regulation of actin and microtubule organization. Part of a WAVE complex that activates the Arp2/3 complex. This chain is Probable protein ABIL4, found in Oryza sativa subsp. japonica (Rice).